The sequence spans 130 residues: uncharacterized protein (130 aa).

The disordered stretch occupies residues 76-102; sequence RKCKNGPSPNKRGSASGCSRRGGGRGS.

This is an uncharacterized protein from Saccharomyces cerevisiae (strain ATCC 204508 / S288c) (Baker's yeast).